The primary structure comprises 203 residues: Ras-related protein Rab-13 (203 aa).

S17, G18, G20, K21, T22, C23, and T40 together coordinate GTP. Residue T22 coordinates Mg(2+). The Switch 1 signature appears at 31 to 45 (DNFNSTYISTIGIDF). Residue T40 participates in Mg(2+) binding. Residues K46 and K58 each participate in a glycyl lysine isopeptide (Lys-Gly) (interchain with G-Cter in ubiquitin) cross-link. D63 provides a ligand contact to Mg(2+). Positions 63 to 80 (DTAGQERFKTITTAYYRG) match the Switch 2 motif. Residues G66, N121, K122, D124, A152, and K153 each contribute to the GTP site. The tract at residues 173-203 (TGGRRSGNSSKPSSTDLKVSDKKNSNKCSLG) is disordered. S178 carries the phosphoserine modification. Polar residues predominate over residues 178–189 (SGNSSKPSSTDL). C200 carries the post-translational modification Cysteine methyl ester. The S-geranylgeranyl cysteine moiety is linked to residue C200. A propeptide spans 201-203 (SLG) (removed in mature form).

This sequence belongs to the small GTPase superfamily. Rab family. In terms of assembly, interacts (GTP-bound form) with MICALL2; competes with RAB8A and is involved in tight junctions assembly. Interacts (GTP-bound form) with MICALL1. Interacts (GTP-bound form) with MICAL1, MICAL3, MICALCL, EHBP1 and EHBP1L1; ternary complexes of RAB8A, RAB13 and either MICAL1 or EHBP1L1 are possible. Interacts with PRKACA; downstream effector of RAB13 involved in tight junction assembly. Interacts with GRB2; may recruit RAB13 to the leading edge of migrating endothelial cells where it can activate RHOA. Interacts (isoprenylated form) with PDE6D; dissociates RAB13 from membranes. Interacts with BICDL2/BICDR2. Interacts with LEPROT and LEPROTL1. Requires Mg(2+) as cofactor. Ubiquitinated via 'Lys-11'-linked ubiquitination on Lys-46 and Lys-58; impairing the recruitment of guanosine diphosphate (GDP) dissociation inhibitor 1/GDI1. Highest levels found in lung, kidney, whole brain and spinal cord. Expressed in all tissues tested including Sertoli and germ cells (at protein level). Also detected in osteoclasts.

The protein resides in the cell membrane. It is found in the cytoplasmic vesicle membrane. Its subcellular location is the cell junction. It localises to the tight junction. The protein localises to the golgi apparatus. The protein resides in the trans-Golgi network membrane. It is found in the recycling endosome membrane. Its subcellular location is the cell projection. It localises to the lamellipodium. It catalyses the reaction GTP + H2O = GDP + phosphate + H(+). Regulated by guanine nucleotide exchange factors (GEFs) including DENND1C, which promote the exchange of bound GDP for free GTP. Regulated by GTPase activating proteins (GAPs) which increase the GTP hydrolysis activity. Inhibited by GDP dissociation inhibitors (GDIs). Activated in response to insulin. Its function is as follows. The small GTPases Rab are key regulators of intracellular membrane trafficking, from the formation of transport vesicles to their fusion with membranes. Rabs cycle between an inactive GDP-bound form and an active GTP-bound form that is able to recruit to membranes different sets of downstream effectors directly responsible for vesicle formation, movement, tethering and fusion. RAB13 is involved in endocytic recycling and regulates the transport to the plasma membrane of transmembrane proteins like the tight junction protein OCLN/occludin. Thereby, it regulates the assembly and the activity of tight junctions. Moreover, it may also regulate tight junction assembly by activating the PKA signaling pathway and by reorganizing the actin cytoskeleton through the activation of the downstream effectors PRKACA and MICALL2 respectively. Through its role in tight junction assembly, may play a role in the establishment of Sertoli cell barrier. Plays also a role in angiogenesis through regulation of endothelial cells chemotaxis. Also involved in neurite outgrowth. Has also been proposed to play a role in post-Golgi membrane trafficking from the TGN to the recycling endosome. Finally, it has been involved in insulin-induced transport to the plasma membrane of the glucose transporter GLUT4 and therefore may play a role in glucose homeostasis. This is Ras-related protein Rab-13 from Rattus norvegicus (Rat).